The following is a 185-amino-acid chain: DNA-directed RNA polymerase 21 kDa subunit (185 aa).

This sequence belongs to the poxviridae DNA-directed RNA polymerase 22 kDa subunit family. As to quaternary structure, the DNA-dependent RNA polymerase used for intermediate and late genes expression consists of eight subunits Rpo30/OPG66, Rpo7/OPG90, Rpo22/OPG103, Rpo147/OPG105, Rpo18/OPG119, Rpo19/OPG131, Rpo132/OPG151 and Rpo35/OPG156. The same holoenzyme, with the addition of the transcription-specificity factor OPG109, is used for early gene expression.

The protein resides in the virion. The catalysed reaction is RNA(n) + a ribonucleoside 5'-triphosphate = RNA(n+1) + diphosphate. Functionally, part of the DNA-dependent RNA polymerase which catalyzes the transcription of viral DNA into RNA using the four ribonucleoside triphosphates as substrates. Responsible for the transcription of early, intermediate and late genes. DNA-dependent RNA polymerase associates with the early transcription factor (ETF), itself composed of OPG118 and OPG133, thereby allowing the early genes transcription. Late transcription, and probably also intermediate transcription, require newly synthesized RNA polymerase. This chain is DNA-directed RNA polymerase 21 kDa subunit (OPG103), found in Oryctolagus cuniculus (Rabbit).